We begin with the raw amino-acid sequence, 129 residues long: NADH-quinone oxidoreductase subunit A (129 aa).

Helical transmembrane passes span 14-34, 67-87, and 97-117; these read LAIH…VAAV, FLIA…FAWA, and GLIE…YLWI.

Belongs to the complex I subunit 3 family. In terms of assembly, NDH-1 is composed of 14 different subunits. Subunits NuoA, H, J, K, L, M, N constitute the membrane sector of the complex.

The protein localises to the cell inner membrane. It catalyses the reaction a quinone + NADH + 5 H(+)(in) = a quinol + NAD(+) + 4 H(+)(out). Functionally, NDH-1 shuttles electrons from NADH, via FMN and iron-sulfur (Fe-S) centers, to quinones in the respiratory chain. The immediate electron acceptor for the enzyme in this species is believed to be ubiquinone. Couples the redox reaction to proton translocation (for every two electrons transferred, four hydrogen ions are translocated across the cytoplasmic membrane), and thus conserves the redox energy in a proton gradient. This is NADH-quinone oxidoreductase subunit A from Rhodopseudomonas palustris (strain BisB18).